A 441-amino-acid polypeptide reads, in one-letter code: Chromosomal replication initiator protein DnaA (441 aa).

Positions 1–71 (MDIRWEEILE…AVYQVVGDRF (71 aa)) are domain I, interacts with DnaA modulators. The domain II stretch occupies residues 71-99 (FKVSILTESETSSHVLKEVIQSKFDDSDS). Residues 100 to 318 (DLNPEYIFSN…GIVNDLVMYK (219 aa)) are domain III, AAA+ region. ATP-binding residues include Gly143, Gly145, Lys146, and Thr147. The interval 319–441 (KAYEYFLLTE…HTIKHKISFQ (123 aa)) is domain IV, binds dsDNA.

It belongs to the DnaA family. In terms of assembly, oligomerizes as a right-handed, spiral filament on DNA at oriC.

It localises to the cytoplasm. Functionally, plays an essential role in the initiation and regulation of chromosomal replication. ATP-DnaA binds to the origin of replication (oriC) to initiate formation of the DNA replication initiation complex once per cell cycle. Binds the DnaA box (a 9 base pair repeat at the origin) and separates the double-stranded (ds)DNA. Forms a right-handed helical filament on oriC DNA; dsDNA binds to the exterior of the filament while single-stranded (ss)DNA is stabiized in the filament's interior. The ATP-DnaA-oriC complex binds and stabilizes one strand of the AT-rich DNA unwinding element (DUE), permitting loading of DNA polymerase. After initiation quickly degrades to an ADP-DnaA complex that is not apt for DNA replication. Binds acidic phospholipids. This is Chromosomal replication initiator protein DnaA from Leptospira biflexa serovar Patoc (strain Patoc 1 / Ames).